The primary structure comprises 343 residues: Holliday junction branch migration complex subunit RuvB (343 aa).

Residues Met-1 to Gln-20 are disordered. The large ATPase domain (RuvB-L) stretch occupies residues Met-1–Tyr-185. ATP-binding positions include Leu-24, Arg-25, Gly-66, Lys-69, Thr-70, Thr-71, Glu-132–Phe-134, Arg-175, Tyr-185, and Arg-222. Thr-70 is a Mg(2+) binding site. The interval Glu-186–Glu-256 is small ATPAse domain (RuvB-S). Residues Arg-259 to Leu-343 are head domain (RuvB-H). 3 residues coordinate DNA: Arg-295, Arg-314, and Arg-319.

Belongs to the RuvB family. Homohexamer. Forms an RuvA(8)-RuvB(12)-Holliday junction (HJ) complex. HJ DNA is sandwiched between 2 RuvA tetramers; dsDNA enters through RuvA and exits via RuvB. An RuvB hexamer assembles on each DNA strand where it exits the tetramer. Each RuvB hexamer is contacted by two RuvA subunits (via domain III) on 2 adjacent RuvB subunits; this complex drives branch migration. In the full resolvosome a probable DNA-RuvA(4)-RuvB(12)-RuvC(2) complex forms which resolves the HJ.

The protein resides in the cytoplasm. It catalyses the reaction ATP + H2O = ADP + phosphate + H(+). Functionally, the RuvA-RuvB-RuvC complex processes Holliday junction (HJ) DNA during genetic recombination and DNA repair, while the RuvA-RuvB complex plays an important role in the rescue of blocked DNA replication forks via replication fork reversal (RFR). RuvA specifically binds to HJ cruciform DNA, conferring on it an open structure. The RuvB hexamer acts as an ATP-dependent pump, pulling dsDNA into and through the RuvAB complex. RuvB forms 2 homohexamers on either side of HJ DNA bound by 1 or 2 RuvA tetramers; 4 subunits per hexamer contact DNA at a time. Coordinated motions by a converter formed by DNA-disengaged RuvB subunits stimulates ATP hydrolysis and nucleotide exchange. Immobilization of the converter enables RuvB to convert the ATP-contained energy into a lever motion, pulling 2 nucleotides of DNA out of the RuvA tetramer per ATP hydrolyzed, thus driving DNA branch migration. The RuvB motors rotate together with the DNA substrate, which together with the progressing nucleotide cycle form the mechanistic basis for DNA recombination by continuous HJ branch migration. Branch migration allows RuvC to scan DNA until it finds its consensus sequence, where it cleaves and resolves cruciform DNA. This chain is Holliday junction branch migration complex subunit RuvB, found in Magnetococcus marinus (strain ATCC BAA-1437 / JCM 17883 / MC-1).